The following is a 217-amino-acid chain: Pre-mRNA-splicing factor sap62 (217 aa).

The segment at 54-84 (FECRLCLTTHANENSYLTHTQGKKHQTNLAR) adopts a Matrin-type zinc-finger fold.

It belongs to the SF3A2 family. As to quaternary structure, belongs to the 40S cdc5-associated complex (or cwf complex), a spliceosome sub-complex reminiscent of a late-stage spliceosome composed of the U2, U5 and U6 snRNAs and at least brr2, cdc5, cwf2/prp3, cwf3/syf1, cwf4/syf3, cwf5/ecm2, spp42/cwf6, cwf7/spf27, cwf8, cwf9, cwf10, cwf11, cwf12, prp45/cwf13, cwf14, cwf15, cwf16, cwf17, cwf18, cwf19, cwf20, cwf21, cwf22, cwf23, cwf24, cwf25, cwf26, cyp7/cwf27, cwf28, cwf29/ist3, lea1, msl1, prp5/cwf1, prp10, prp12/sap130, prp17, prp22, sap61, sap62, sap114, sap145, slu7, smb1, smd1, smd3, smf1, smg1 and syf2.

The protein resides in the nucleus. Its subcellular location is the cytoplasm. In terms of biological role, involved in mRNA splicing where it associates with cdc5 and the other cwf proteins as part of the spliceosome. In Schizosaccharomyces pombe (strain 972 / ATCC 24843) (Fission yeast), this protein is Pre-mRNA-splicing factor sap62 (sap62).